The following is a 303-amino-acid chain: Methionyl-tRNA formyltransferase (303 aa).

Position 110 to 113 (110 to 113 (SLLP)) interacts with (6S)-5,6,7,8-tetrahydrofolate.

This sequence belongs to the Fmt family.

The catalysed reaction is L-methionyl-tRNA(fMet) + (6R)-10-formyltetrahydrofolate = N-formyl-L-methionyl-tRNA(fMet) + (6S)-5,6,7,8-tetrahydrofolate + H(+). In terms of biological role, attaches a formyl group to the free amino group of methionyl-tRNA(fMet). The formyl group appears to play a dual role in the initiator identity of N-formylmethionyl-tRNA by promoting its recognition by IF2 and preventing the misappropriation of this tRNA by the elongation apparatus. The chain is Methionyl-tRNA formyltransferase from Ehrlichia ruminantium (strain Gardel).